The following is an 88-amino-acid chain: Large ribosomal subunit protein eL31 (88 aa).

Belongs to the eukaryotic ribosomal protein eL31 family.

This chain is Large ribosomal subunit protein eL31 (rpl31e), found in Archaeoglobus fulgidus (strain ATCC 49558 / DSM 4304 / JCM 9628 / NBRC 100126 / VC-16).